The following is a 199-amino-acid chain: Homeobox protein ceh-19 (199 aa).

A disordered region spans residues 1 to 42; it reads MAFNIESLLEKKSNPVEEGNDFEEENDSEKNGEEDEEEEEKN. Over residues 18–40 the composition is skewed to acidic residues; the sequence is EGNDFEEENDSEKNGEEDEEEEE. Positions 94–153 form a DNA-binding region, homeobox; sequence ERKPRQAYSARQLDRLETEFQTDKYLSVNKRIQLSQTLNLTETQIKTWFQNRRTKWKKQL.

The protein resides in the nucleus. Probable transcription factor. Required for MC motor neuron differentiation and function, including role in modulating pharyngeal pumping. Regulates gene expression of FMRFamide-like neuropeptide flp-2 in MC motor neurons. May act downstream of transcription factor pha-4. This chain is Homeobox protein ceh-19 (ceh-19), found in Caenorhabditis elegans.